A 114-amino-acid chain; its full sequence is Evasin P1096 (114 aa).

A signal peptide spans methionine 1–threonine 23. Disulfide bonds link cysteine 47-cysteine 65, cysteine 51-cysteine 67, and cysteine 61-cysteine 78. N-linked (GlcNAc...) asparagine glycosylation occurs at asparagine 50. Residues aspartate 89–serine 114 are disordered. Residues alanine 99 to serine 114 are compositionally biased toward basic and acidic residues.

The protein resides in the secreted. In terms of biological role, salivary chemokine-binding protein which binds to host chemokine CXCL8. The sequence is that of Evasin P1096 from Ixodes ricinus (Common tick).